Here is a 1132-residue protein sequence, read N- to C-terminus: BTB/POZ domain-containing protein 7 (1132 aa).

Residues 1 to 10 show a composition bias toward polar residues; sequence MGANASNYPH. The disordered stretch occupies residues 1–24; that stretch reads MGANASNYPHSCSPRVGGNSQAQQ. G2 is lipidated: N-myristoyl glycine. BTB domains lie at 142–211 and 247–341; these read TDVD…GMED and YDVV…DLSV. The BACK domain maps to 413–479; that stretch reads YGSKWVHRQA…WGEHQLMKRI (67 aa). S722 is subject to Phosphoserine. Disordered stretches follow at residues 897 to 1019 and 1035 to 1132; these read LSQS…HLHR and QRSD…KSAL. Basic residues predominate over residues 918-927; sequence RHTHTSRKKH. Composition is skewed to basic and acidic residues over residues 928–939, 1000–1019, 1083–1093, and 1105–1114; these read TLEQKTDTRENP, KKQEEARREYPLSPDGHLHR, PEERSGRRLAD, and TDLEREDSIS. The residue at position 1012 (S1012) is a Phosphoserine.

Its subcellular location is the nucleus. In terms of biological role, acts as a mediator of epithelial dynamics and organ branching by promoting cleft progression. Induced following accumulation of fibronectin in forming clefts, leading to local expression of the cell-scattering SNAIL2 and suppression of E-cadherin levels, thereby altering cell morphology and reducing cell-cell adhesion. This stimulates cell separation at the base of forming clefts by local, dynamic intercellular gap formation and promotes cleft progression. This chain is BTB/POZ domain-containing protein 7 (BTBD7), found in Homo sapiens (Human).